A 358-amino-acid polypeptide reads, in one-letter code: Peptide chain release factor 1 (358 aa).

N5-methylglutamine is present on Gln237.

It belongs to the prokaryotic/mitochondrial release factor family. In terms of processing, methylated by PrmC. Methylation increases the termination efficiency of RF1.

The protein resides in the cytoplasm. Peptide chain release factor 1 directs the termination of translation in response to the peptide chain termination codons UAG and UAA. The chain is Peptide chain release factor 1 from Streptomyces coelicolor (strain ATCC BAA-471 / A3(2) / M145).